The sequence spans 427 residues: DNA topoisomerase 6 subunit A (427 aa).

Residues 76–209 (LSLSSVQTEI…LNVIAAEKGV (134 aa)) form the Topo IIA-type catalytic domain. Tyr170 (O-(5'-phospho-DNA)-tyrosine intermediate) is an active-site residue. 2 residues coordinate Mg(2+): Glu256 and Asp308.

The protein belongs to the TOP6A family. Homodimer. Heterotetramer of two TOP6A and two TOP6B subunits. Interacts with BIN4 and RHL1. Requires Mg(2+) as cofactor. Highly expressed in leaves, stems, flowers and seedlings.

Its subcellular location is the nucleus. The enzyme catalyses ATP-dependent breakage, passage and rejoining of double-stranded DNA.. Its function is as follows. Component of the DNA topoisomerase VI involved in chromatin organization and progression of endoreduplication cycles. Relaxes both positive and negative superturns and exhibits a strong decatenase activity. Involved in cell-elongation processes. The sequence is that of DNA topoisomerase 6 subunit A from Arabidopsis thaliana (Mouse-ear cress).